Here is a 245-residue protein sequence, read N- to C-terminus: Thiopurine S-methyltransferase (245 aa).

29 to 40 (WREKWVDGKIGF) is a binding site for S-adenosyl-L-methionine. Phenylalanine 40 provides a ligand contact to substrate. An N6-acetyllysine modification is found at lysine 58. Residues leucine 69, glutamate 90, and arginine 152 each contribute to the S-adenosyl-L-methionine site.

It belongs to the class I-like SAM-binding methyltransferase superfamily. TPMT family. As to quaternary structure, monomer.

The protein localises to the cytoplasm. The catalysed reaction is S-adenosyl-L-methionine + a thiopurine = S-adenosyl-L-homocysteine + a thiopurine S-methylether.. The polypeptide is Thiopurine S-methyltransferase (TPMT) (Panthera leo (Lion)).